The following is a 426-amino-acid chain: Serine hydroxymethyltransferase (426 aa).

(6S)-5,6,7,8-tetrahydrofolate is bound by residues L118 and 122–124 (GHL). The residue at position 227 (K227) is an N6-(pyridoxal phosphate)lysine. Residues 342-368 (NTIPNDPKPPTQASGIRLGTPAMTTRG) are disordered.

It belongs to the SHMT family. In terms of assembly, homodimer. Requires pyridoxal 5'-phosphate as cofactor.

It localises to the cytoplasm. The catalysed reaction is (6R)-5,10-methylene-5,6,7,8-tetrahydrofolate + glycine + H2O = (6S)-5,6,7,8-tetrahydrofolate + L-serine. The protein operates within one-carbon metabolism; tetrahydrofolate interconversion. Its pathway is amino-acid biosynthesis; glycine biosynthesis; glycine from L-serine: step 1/1. In terms of biological role, catalyzes the reversible interconversion of serine and glycine with tetrahydrofolate (THF) serving as the one-carbon carrier. This reaction serves as the major source of one-carbon groups required for the biosynthesis of purines, thymidylate, methionine, and other important biomolecules. Also exhibits THF-independent aldolase activity toward beta-hydroxyamino acids, producing glycine and aldehydes, via a retro-aldol mechanism. The polypeptide is Serine hydroxymethyltransferase (Thermomicrobium roseum (strain ATCC 27502 / DSM 5159 / P-2)).